The sequence spans 95 residues: Aspartyl/glutamyl-tRNA(Asn/Gln) amidotransferase subunit C (95 aa).

Belongs to the GatC family. In terms of assembly, heterotrimer of A, B and C subunits.

It carries out the reaction L-glutamyl-tRNA(Gln) + L-glutamine + ATP + H2O = L-glutaminyl-tRNA(Gln) + L-glutamate + ADP + phosphate + H(+). It catalyses the reaction L-aspartyl-tRNA(Asn) + L-glutamine + ATP + H2O = L-asparaginyl-tRNA(Asn) + L-glutamate + ADP + phosphate + 2 H(+). Functionally, allows the formation of correctly charged Asn-tRNA(Asn) or Gln-tRNA(Gln) through the transamidation of misacylated Asp-tRNA(Asn) or Glu-tRNA(Gln) in organisms which lack either or both of asparaginyl-tRNA or glutaminyl-tRNA synthetases. The reaction takes place in the presence of glutamine and ATP through an activated phospho-Asp-tRNA(Asn) or phospho-Glu-tRNA(Gln). This Caulobacter sp. (strain K31) protein is Aspartyl/glutamyl-tRNA(Asn/Gln) amidotransferase subunit C.